Reading from the N-terminus, the 589-residue chain is Putative adenine deaminase BC_3012 (589 aa).

The protein belongs to the metallo-dependent hydrolases superfamily. Adenine deaminase family.

The enzyme catalyses adenine + H2O + H(+) = hypoxanthine + NH4(+). This chain is Putative adenine deaminase BC_3012, found in Bacillus cereus (strain ATCC 14579 / DSM 31 / CCUG 7414 / JCM 2152 / NBRC 15305 / NCIMB 9373 / NCTC 2599 / NRRL B-3711).